Consider the following 160-residue polypeptide: Cytochrome b6-f complex subunit 4 (160 aa).

Helical transmembrane passes span 36–56 (LLYM…GLAV), 95–115 (LLGI…PFIE), and 131–151 (AVFL…ALPI).

This sequence belongs to the cytochrome b family. PetD subfamily. As to quaternary structure, the 4 large subunits of the cytochrome b6-f complex are cytochrome b6, subunit IV (17 kDa polypeptide, PetD), cytochrome f and the Rieske protein, while the 4 small subunits are PetG, PetL, PetM and PetN. The complex functions as a dimer.

It is found in the cellular thylakoid membrane. Functionally, component of the cytochrome b6-f complex, which mediates electron transfer between photosystem II (PSII) and photosystem I (PSI), cyclic electron flow around PSI, and state transitions. The chain is Cytochrome b6-f complex subunit 4 from Synechococcus elongatus (strain ATCC 33912 / PCC 7942 / FACHB-805) (Anacystis nidulans R2).